The following is a 757-amino-acid chain: Voltage-gated potassium channel KCNC3 (757 aa).

The important for normal N-type inactivation stretch occupies residues methionine 1 to glycine 78. The segment at methionine 1–serine 87 is disordered. Residues methionine 1–arginine 290 lie on the Cytoplasmic side of the membrane. The span at proline 21–glutamine 40 shows a compositional bias: pro residues. Over residues glutamine 41 to proline 52 the composition is skewed to low complexity. Positions 157, 163, 184, and 185 each coordinate Zn(2+). Residues alanine 210–alanine 219 show a composition bias toward low complexity. Residues alanine 210–glycine 232 form a disordered region. Residues tyrosine 291–leucine 309 form a helical membrane-spanning segment. 2 N-linked (GlcNAc...) asparagine glycosylation sites follow: asparagine 320 and asparagine 336. Residues valine 351 to cysteine 370 traverse the membrane as a helical segment. At proline 371–serine 379 the chain is on the cytoplasmic side. Residues serine 380–leucine 398 form a helical membrane-spanning segment. Residues phenylalanine 412–leucine 434 traverse the membrane as a helical; Voltage-sensor segment. Residues arginine 435–glutamate 447 are Cytoplasmic-facing. The chain crosses the membrane as a helical span at residues phenylalanine 448–alanine 469. Asparagine 483 carries N-linked (GlcNAc...) asparagine glycosylation. Threonine 503, leucine 504, glycine 505, and tyrosine 506 together coordinate K(+). The short motif at threonine 503–aspartate 508 is the Selectivity filter element. A helical membrane pass occupies residues leucine 518–valine 539. Residues asparagine 540 to proline 757 lie on the Cytoplasmic side of the membrane. A disordered region spans residues proline 556–tyrosine 613. Arginine 625 is subject to Omega-N-methylarginine. The interval glutamine 682–aspartate 746 is disordered. Residues serine 686 and serine 691 each carry the phosphoserine modification. Residues proline 728–phenylalanine 743 are compositionally biased toward pro residues.

It belongs to the potassium channel family. C (Shaw) (TC 1.A.1.2) subfamily. Kv3.3/KCNC3 sub-subfamily. Homotetramer. Heterotetramer with KCNC1. Interacts (via C-terminus) with HAX1; this interaction modulates channel gating. Identified in a complex with ACTR3, a subunit of the Arp2/3 complex; this interaction is indirect and depends on the presence of HAX1. Post-translationally, N-glycosylated.

The protein localises to the cell membrane. Its subcellular location is the presynaptic cell membrane. The protein resides in the perikaryon. It is found in the cell projection. It localises to the axon. The protein localises to the dendrite. Its subcellular location is the dendritic spine membrane. The protein resides in the cytoplasm. It is found in the cell cortex. It localises to the cytoskeleton. The catalysed reaction is K(+)(in) = K(+)(out). Its function is as follows. Voltage-gated potassium channel that plays an important role in the rapid repolarization of fast-firing brain neurons. The channel opens in response to the voltage difference across the membrane, forming a potassium-selective channel through which potassium ions pass in accordance with their electrochemical gradient. The channel displays rapid activation and inactivation kinetics. It plays a role in the regulation of the frequency, shape and duration of action potentials in Purkinje cells. Required for normal survival of cerebellar neurons, probably via its role in regulating the duration and frequency of action potentials that in turn regulate the activity of voltage-gated Ca(2+) channels and cellular Ca(2+) homeostasis. Required for normal motor function. Plays a role in the reorganization of the cortical actin cytoskeleton and the formation of actin veil structures in neuronal growth cones via its interaction with HAX1 and the Arp2/3 complex. This is Voltage-gated potassium channel KCNC3 (KCNC3) from Homo sapiens (Human).